Consider the following 288-residue polypeptide: Structure-specific endonuclease subunit SLX1 (288 aa).

In terms of domain architecture, GIY-YIG spans 10–93 (DFYCSYLLRS…QHSYKTRFIE (84 aa)). The segment at 209 to 265 (CMICDKKIDYIHDEGTQMVGFCSDDECDFLSCLSCLYKEFTKNSKQIIPKSGHCPNC) adopts an SLX1-type zinc-finger fold.

Belongs to the SLX1 family. Forms a heterodimer with SLX4. Requires a divalent metal cation as cofactor.

The protein resides in the nucleus. Functionally, catalytic subunit of the SLX1-SLX4 structure-specific endonuclease that resolves DNA secondary structures generated during DNA repair and recombination. Has endonuclease activity towards branched DNA substrates, introducing single-strand cuts in duplex DNA close to junctions with ss-DNA. The chain is Structure-specific endonuclease subunit SLX1 from Kluyveromyces lactis (strain ATCC 8585 / CBS 2359 / DSM 70799 / NBRC 1267 / NRRL Y-1140 / WM37) (Yeast).